Consider the following 405-residue polypeptide: Tryptophan synthase beta chain (405 aa).

Position 98 is an N6-(pyridoxal phosphate)lysine (K98).

Belongs to the TrpB family. As to quaternary structure, tetramer of two alpha and two beta chains. Pyridoxal 5'-phosphate is required as a cofactor.

It catalyses the reaction (1S,2R)-1-C-(indol-3-yl)glycerol 3-phosphate + L-serine = D-glyceraldehyde 3-phosphate + L-tryptophan + H2O. It functions in the pathway amino-acid biosynthesis; L-tryptophan biosynthesis; L-tryptophan from chorismate: step 5/5. The beta subunit is responsible for the synthesis of L-tryptophan from indole and L-serine. This chain is Tryptophan synthase beta chain, found in Xanthomonas axonopodis pv. citri (strain 306).